We begin with the raw amino-acid sequence, 846 residues long: MASSHTPMMQQYLRIKTDYPDMLLFYRMGDFYELFFDDAKRASQLLDLTLTHRGQSADKPIPMAGVPYHAVENYLARLLKKGESVAICEQIGDPATSKGPVERQVTRIITPGTVTDEALLDARKDNILLAIHTQKQKIGIAWVDLGGGRFHLQELTEEHQLNAELVRLQPAELLCKESTPLPSFCSNFAVKFRPGWEFDASNAHKLLCEQFSVTDLSAFGEQNYPTALIAAGALLAYLKTTQKQSLPHLTTLTLEQSEDYLQLDASTQRHLELFENIHGGGEHCLLSILDKTACAMGSRLLKRWLGKPLKQHAIIQTRQQAIKEIIFLQQDVSLHQLIKQCADVERIVSRIALKSARPRDLVSLLQTLILLPAIHDELQENKTLLINEIKKEISPLPLLQQLLETAIIDNPPMLIRDGGVIAPGFDEELDELRNLSSNAHETLVKLEQEEKNRTGLSTLKLGYNSVQGFYIELSKAQAQNAPPHFHRKQTLKNVERYITPELKLFEDKVLSAQSKALAREKWLYDNLLEEIQQYIPELSDLAKSLAQLDVLVTLTERAQSLNWNCPNLVPESGIMIQAGRHPVIEPLLQERFIANDLELKPNQNMLLITGPNMGGKSTYMRQTALIVLLAHIGSFVPADEVRLGPLDRIFTRIGASDDLSSGRSTFMVEMTETAQILRQATSQSLVLIDEIGRGTSTYDGMALAYASCAFLASTIKAYTLFSTHYLELTELPKDFSCIRNVHLQASIKTGQIVFLYRVEEGCANRSYGLEVAELAGIPKEVLKLAHEHLNQIQDTQSILVQTQIIKPPTSPILTELKKIDPDRLTAKEALDLIYKLKQLECVESIN.

Residue 610-617 participates in ATP binding; sequence GPNMGGKS.

This sequence belongs to the DNA mismatch repair MutS family.

Functionally, this protein is involved in the repair of mismatches in DNA. It is possible that it carries out the mismatch recognition step. This protein has a weak ATPase activity. The sequence is that of DNA mismatch repair protein MutS from Legionella pneumophila (strain Lens).